A 176-amino-acid chain; its full sequence is MASSSGNDDDLTIPRAAINKMIKETLPNVRVANDARELVVNCCTEFIHLISSEANEICNKSEKKTISPEHVIQALESLGFGSYISEVKEVLQECKTVALKRRKASSRLENLGIPEEELLRQQQELFAKARQQQAELAQQEWLQMQQAAQQAQLAAASASASNQAGSSQDEEDDDDI.

A2 is modified (N-acetylalanine). The Histone-fold domain maps to 12–75; sequence TIPRAAINKM…ISPEHVIQAL (64 aa). The short motif at 100–103 is the Nuclear localization signal element; the sequence is KRRK. Residues S105, S106, S166, and S167 each carry the phosphoserine modification. Residues 152 to 167 show a composition bias toward low complexity; that stretch reads QLAAASASASNQAGSS. Positions 152 to 176 are disordered; the sequence is QLAAASASASNQAGSSQDEEDDDDI.

The protein belongs to the NC2 beta/DR1 family. In terms of assembly, heterodimer with DRAP1. DR1 exists in solution as a homotetramer that dissociates during interaction with TBP and then, after complexing with TBP, reassociates at a slow rate, to reconstitute the tetramer. Interacts with NFIL3. Component of the ADA2A-containing complex (ATAC), composed of KAT14, KAT2A, TADA2L, TADA3L, ZZ3, MBIP, WDR5, YEATS2, CCDC101 and DR1. Phosphorylation regulates its interaction with TBP. Not phosphorylated when bound to DRAP1.

The protein localises to the nucleus. Functionally, the association of the DR1/DRAP1 heterodimer with TBP results in a functional repression of both activated and basal transcription of class II genes. This interaction precludes the formation of a transcription-competent complex by inhibiting the association of TFIIA and/or TFIIB with TBP. Can bind to DNA on its own. Component of the ATAC complex, a complex with histone acetyltransferase activity on histones H3 and H4. The sequence is that of Protein Dr1 (DR1) from Homo sapiens (Human).